The chain runs to 275 residues: Glycerol-3-phosphate dehydrogenase [NAD(P)+] (275 aa).

NADPH contacts are provided by Trp12, Arg32, and Lys105. Sn-glycerol 3-phosphate is bound by residues Lys105, Gly133, and Thr135. Ala137 is an NADPH binding site. The sn-glycerol 3-phosphate site is built by Lys188, Asp241, Ser251, Arg252, and Asn253. The active-site Proton acceptor is the Lys188. An NADPH-binding site is contributed by Arg252.

Belongs to the NAD-dependent glycerol-3-phosphate dehydrogenase family.

The protein resides in the cytoplasm. It catalyses the reaction sn-glycerol 3-phosphate + NAD(+) = dihydroxyacetone phosphate + NADH + H(+). It carries out the reaction sn-glycerol 3-phosphate + NADP(+) = dihydroxyacetone phosphate + NADPH + H(+). The protein operates within membrane lipid metabolism; glycerophospholipid metabolism. Functionally, catalyzes the reduction of the glycolytic intermediate dihydroxyacetone phosphate (DHAP) to sn-glycerol 3-phosphate (G3P), the key precursor for phospholipid synthesis. The sequence is that of Glycerol-3-phosphate dehydrogenase [NAD(P)+] from Paramagnetospirillum magneticum (strain ATCC 700264 / AMB-1) (Magnetospirillum magneticum).